The chain runs to 331 residues: Geranylgeranyl transferase type-2 subunit beta (331 aa).

An N-acetylglycine modification is found at glycine 2. Position 3 is a phosphothreonine (threonine 3). PFTB repeat units lie at residues 20–61 (LEKH…DLMG), 68–109 (REEI…TLYD), 116–157 (VNKV…ALLG), 164–205 (VEKA…AITS), 212–253 (SDLL…KIIG), and 260–302 (REKL…SLLG). 190-192 (HAG) contacts geranylgeranyl diphosphate. 2 residues coordinate Zn(2+): aspartate 238 and cysteine 240. 241–244 (YSWW) contacts geranylgeranyl diphosphate. Position 290 (histidine 290) interacts with Zn(2+).

The protein belongs to the protein prenyltransferase subunit beta family. As to quaternary structure, heterotrimer composed of RABGGTA, RABGGTB and CHM; within this trimer, RABGGTA and RABGGTB form the catalytic component B, while CHM (component A) mediates peptide substrate binding. The Rab GGTase dimer (RGGT) interacts with CHM (component A) prior to Rab protein binding; the association is stabilized by geranylgeranyl pyrophosphate (GGpp). The CHM:RGGT:Rab complex is destabilized by GGpp. Interaction of RABGGTB with prenylated PTP4A2 precludes its association with RABGGTA and inhibits enzyme activity. Interacts with CHODL. Interacts with non-phosphorylated form of RAB8A; phosphorylation of RAB8A at 'Thr-72' disrupts this interaction. Zn(2+) serves as cofactor.

It catalyses the reaction geranylgeranyl diphosphate + L-cysteinyl-[protein] = S-geranylgeranyl-L-cysteinyl-[protein] + diphosphate. With respect to regulation, the enzymatic reaction requires the aid of a Rab escort protein (also called component A). In terms of biological role, catalyzes the transfer of a geranylgeranyl moiety from geranylgeranyl diphosphate to both cysteines of Rab proteins with the C-terminal sequence -XXCC, -XCXC and -CCXX, such as RAB1A, RAB3A, RAB5A and RAB7A. The protein is Geranylgeranyl transferase type-2 subunit beta (RABGGTB) of Homo sapiens (Human).